The following is a 226-amino-acid chain: Small ribosomal subunit protein uS2c (226 aa).

It belongs to the universal ribosomal protein uS2 family.

The protein localises to the plastid. Its subcellular location is the chloroplast. The chain is Small ribosomal subunit protein uS2c (rps2) from Ostreococcus tauri.